The primary structure comprises 204 residues: Protein FAM167A (204 aa).

Residues 58–80 (GLAVSDGSTELEKDAGLKPRATP) are disordered. Positions 113 to 146 (LRKELMEMRIQDQQLARQLMRLRGDINKLKVEQT) form a coiled coil.

Belongs to the FAM167 (SEC) family.

This is Protein FAM167A (fam167a) from Danio rerio (Zebrafish).